We begin with the raw amino-acid sequence, 713 residues long: Ribosomal RNA large subunit methyltransferase K/L (713 aa).

Residues L43–F154 enclose the THUMP domain.

This sequence belongs to the methyltransferase superfamily. RlmKL family.

It is found in the cytoplasm. The enzyme catalyses guanosine(2445) in 23S rRNA + S-adenosyl-L-methionine = N(2)-methylguanosine(2445) in 23S rRNA + S-adenosyl-L-homocysteine + H(+). It carries out the reaction guanosine(2069) in 23S rRNA + S-adenosyl-L-methionine = N(2)-methylguanosine(2069) in 23S rRNA + S-adenosyl-L-homocysteine + H(+). Functionally, specifically methylates the guanine in position 2445 (m2G2445) and the guanine in position 2069 (m7G2069) of 23S rRNA. This is Ribosomal RNA large subunit methyltransferase K/L from Shewanella sp. (strain MR-7).